The following is a 97-amino-acid chain: Ferredoxin-3 (97 aa).

4Fe-4S ferredoxin-type domains are found at residues 18 to 47 (FAES…LKAL) and 65 to 95 (KVMV…HNPL). [4Fe-4S] cluster-binding residues include Cys27, Cys30, Cys33, Cys37, Cys75, Cys78, Cys81, and Cys85.

As to quaternary structure, homodimer. [4Fe-4S] cluster serves as cofactor.

Its function is as follows. Ferredoxins are iron-sulfur proteins that transfer electrons in a wide variety of metabolic reactions. This Nostoc sp. (strain PCC 7120 / SAG 25.82 / UTEX 2576) protein is Ferredoxin-3 (fdxB).